The following is a 604-amino-acid chain: Microtubule-associated protein 70-4 (604 aa).

The disordered stretch occupies residues 1-33 (MEERGFMSPSLAISASYREGGSKGMSRRRSMRP). Residues 49–351 (DPVRIELNRL…ADRAAKSEAQ (303 aa)) are a coiled coil. The required for targeting to microtubules stretch occupies residues 233 to 470 (IIDKMHRQKV…PLNHKSSEGT (238 aa)). Disordered regions lie at residues 367–422 (LKGP…RSLT) and 434–495 (GTSR…NDSV). Low complexity predominate over residues 371–385 (TSSSSRGTSVGRSSS). Composition is skewed to polar residues over residues 401 to 422 (PKIT…RSLT) and 468 to 478 (EGTSRGESPSS). Positions 521–569 (LRDKDEAIEMLAKKVETLTKAMDVEAKKMRREVAVMGKEVAAMRVVDKG) form a coiled coil.

The protein belongs to the MAP70 family.

Its subcellular location is the cytoplasm. The protein localises to the cytoskeleton. Functionally, plant-specific protein that interact with microtubules. The protein is Microtubule-associated protein 70-4 (MAP70.4) of Arabidopsis thaliana (Mouse-ear cress).